We begin with the raw amino-acid sequence, 599 residues long: Capsular polysaccharide biosynthesis protein CapD (599 aa).

The next 4 membrane-spanning stretches (helical) occupy residues 12–32 (ILII…YAIL), 41–61 (IDLL…FAYV), 79–99 (SVLK…SLLI), and 102–122 (SPFL…IGGS).

This sequence belongs to the polysaccharide synthase family.

Its subcellular location is the cell membrane. It participates in capsule biogenesis; capsule polysaccharide biosynthesis. Its function is as follows. Required for the biosynthesis of type 1 capsular polysaccharide. This chain is Capsular polysaccharide biosynthesis protein CapD (capD), found in Staphylococcus aureus.